The chain runs to 755 residues: Probable ubiquitin carboxyl-terminal hydrolase creB (755 aa).

The tract at residues 1–32 (MGSFLRSLRRDVGPPTPSVGATPAKKEPPVPP) is disordered. The region spanning 55–468 (FGMENYGNTC…CAYVLFYQET (414 aa)) is the USP domain. Residue C64 is the Nucleophile of the active site. Disordered regions lie at residues 119-146 (EKQK…DSPE) and 237-270 (EASK…TPNT). Positions 237–246 (EASKQPEPER) are enriched in basic and acidic residues. The segment covering 254 to 270 (ADSTELSGSSGSKTPNT) has biased composition (polar residues). The Proton acceptor role is filled by H419. The disordered stretch occupies residues 495–755 (TLKQNGYPLS…LKKKSFSILS (261 aa)). Low complexity predominate over residues 547-560 (ESSPADPSTTASAT). Basic and acidic residues predominate over residues 577–648 (KKSDSHFKKE…RRHSPDDTKK (72 aa)). Residues 581–630 (SHFKKERAKEEKERKANEKEKEKQRRRDQEARIREQRREDAEIRAALEAS) are a coiled coil. Basic residues predominate over residues 654–666 (SRLKRGSKSFSHR). Positions 693–709 (NGASESQQQLPNGQSPG) are enriched in polar residues. A compositionally biased stretch (basic and acidic residues) spans 718–733 (TGLDEERDTLKDPKHD). The segment covering 734–755 (RSGHHGKWRSFSLKKKSFSILS) has biased composition (basic residues).

It belongs to the peptidase C19 family. As to quaternary structure, interacts with creA, creC and qutD.

It carries out the reaction Thiol-dependent hydrolysis of ester, thioester, amide, peptide and isopeptide bonds formed by the C-terminal Gly of ubiquitin (a 76-residue protein attached to proteins as an intracellular targeting signal).. Ubiquitin thioesterase component of the regulatory network controlling carbon source utilization through ubiquitination and deubiquitination involving creA, creB, creC, creD and acrB. Deubiquitinates the creA catabolic repressor and the quinate permease qutD. Also plays a role in response to carbon starvation and the control of extracellular proteases activity. The sequence is that of Probable ubiquitin carboxyl-terminal hydrolase creB (creB) from Aspergillus flavus (strain ATCC 200026 / FGSC A1120 / IAM 13836 / NRRL 3357 / JCM 12722 / SRRC 167).